The chain runs to 424 residues: Inhibin beta A chain (424 aa).

A signal peptide spans 1–20 (MPLLWLRGFLLASCWIIVRS). A propeptide spanning residues 21–308 (SPTPGSEGHG…EDHPHRRRRR (288 aa)) is cleaved from the precursor. N165 carries an N-linked (GlcNAc...) asparagine glycan. Basic and acidic residues predominate over residues 264 to 275 (EVDGDGKKKDGS). The disordered stretch occupies residues 264–306 (EVDGDGKKKDGSDGGLEEEKEQSHRPFLMLQARQSEDHPHRRR). Cystine bridges form between C312/C320, C319/C389, C348/C421, and C352/C423.

The protein belongs to the TGF-beta family. In terms of assembly, dimeric, linked by one or more disulfide bonds. Inhibin A is a dimer of alpha/INHA and beta-A/INHBA. Activin A is a homodimer of beta-A/INHBA. Activin AB is a dimer of beta-A/INHBA and beta-B/INHBB. Interacts with FST and FSTL3; these interactions prevent activin A interaction to its type II receptor. Activin A interacts with ACVR2A. Activin A interacts with BMPR2. Inhibin A interacts with ACVR1; this interaction creates a non-signaling complex (NSC) that inhibits ACVR1-mediated BMP signaling. Inhibin A interacts with ACVR2A.

It localises to the secreted. Inhibins/activins are involved in regulating a number of diverse functions such as hypothalamic and pituitary hormone secretion, gonadal hormone secretion, germ cell development and maturation, erythroid differentiation, insulin secretion, nerve cell survival, embryonic axial development or bone growth, depending on their subunit composition. In terms of biological role, activin A is a homodimer of INHBA that plays a role in several essential biological processes including embryonic development, stem cell maintenance and differentiation, haematopoiesis, cell proliferation and tissue fibrosis. Signals through type I (such as ACVR1B or ACVR1C) and type II receptors (such as ACVR2A, ACVR2B or BMPR2) which, upon ligand binding, phosphorylate SMAD2 and SMAD3 intracellular signaling mediators that form a complex with SMAD4, translocate to the nucleus and modulate gene expression. Can also activate alternative non-canonical intracellular signaling pathways including the p38 MAPK, extracellular signal-regulated kinases 1/2 (ERK1/2) and c-Jun N-terminal kinases (JNKs) to modulate cell migration and differentiation. Alternatively, promotes osteoblastic differentiation via ACVRL1-SMAD1/5/9 pathway. In addition, can engage the type I receptor ACVR1 to form an ACVR1-activin A-type II receptor non-signaling complex (NSC) that renders receptors unavailable for engagement with BMPs, hence resulting in an apparent inhibition of ACVR1-mediated BMP signaling. Functionally, inhibin A is a dimer of alpha/INHA and beta-A/INHBA that functions as a feedback regulator in the hypothalamic-pituitary-gonadal (HPG) axis. Inhibits the secretion of FSH from the anterior pituitary gland by acting on pituitary gonadotrope cells. Antagonizes activin A by binding to the proteoglycan, betaglycan, and forming a stable complex with and, thereby, sequestering type II activin receptors while excluding type I receptor. The chain is Inhibin beta A chain (Inhba) from Rattus norvegicus (Rat).